Reading from the N-terminus, the 163-residue chain is Urease accessory protein UreE (163 aa).

Belongs to the UreE family.

It is found in the cytoplasm. Its function is as follows. Involved in urease metallocenter assembly. Binds nickel. Probably functions as a nickel donor during metallocenter assembly. In Actinomyces naeslundii, this protein is Urease accessory protein UreE.